The following is a 322-amino-acid chain: Mitochondrial glutamate carrier 1 (322 aa).

Solcar repeat units lie at residues 6 to 93 (ISLP…FRYQ), 101 to 214 (LTLF…LNEL), and 223 to 312 (SPFY…GIAE). 6 helical membrane passes run 12–32 (LING…IDLA), 62–82 (YFGM…EKAI), 107–127 (MLAG…MEML), 189–209 (GLGA…PLFA), 223–243 (SPFY…AVAV), and 292–312 (ALVI…GIAE).

This sequence belongs to the mitochondrial carrier (TC 2.A.29) family.

Its subcellular location is the mitochondrion inner membrane. The enzyme catalyses L-glutamate(in) + H(+)(in) = L-glutamate(out) + H(+)(out). Functionally, mitochondrial glutamate/H(+) symporter. Responsible for the transport of glutamate from the cytosol into the mitochondrial matrix with the concomitant import of a proton. Plays a role in the control of glucose-stimulated insulin secretion. The polypeptide is Mitochondrial glutamate carrier 1 (SLC25A22) (Bos taurus (Bovine)).